The chain runs to 77 residues: U8-lycotoxin-Ls1m (77 aa).

Positions methionine 1–alanine 20 are cleaved as a signal peptide. Positions glutamine 21–lysine 26 are excised as a propeptide.

This sequence belongs to the neurotoxin 19 (CSTX) family. 08 (U8-Lctx) subfamily. Post-translationally, contains 4 disulfide bonds. Expressed by the venom gland.

The protein localises to the secreted. The protein is U8-lycotoxin-Ls1m of Lycosa singoriensis (Wolf spider).